Reading from the N-terminus, the 378-residue chain is Carbamoyl phosphate synthase small chain (378 aa).

Positions 1–189 are CPSase; the sequence is MTKPAILALA…DSHPEIPAGE (189 aa). L-glutamine is bound by residues serine 47, glycine 241, and glycine 243. The 186-residue stretch at 193–378 folds into the Glutamine amidotransferase type-1 domain; it reads HVVAYDYGVK…RFISAMAERR (186 aa). Cysteine 269 serves as the catalytic Nucleophile. The L-glutamine site is built by leucine 270, glutamine 273, asparagine 311, glycine 313, and phenylalanine 314. Catalysis depends on residues histidine 353 and glutamate 355.

It belongs to the CarA family. In terms of assembly, composed of two chains; the small (or glutamine) chain promotes the hydrolysis of glutamine to ammonia, which is used by the large (or ammonia) chain to synthesize carbamoyl phosphate. Tetramer of heterodimers (alpha,beta)4.

It catalyses the reaction hydrogencarbonate + L-glutamine + 2 ATP + H2O = carbamoyl phosphate + L-glutamate + 2 ADP + phosphate + 2 H(+). The enzyme catalyses L-glutamine + H2O = L-glutamate + NH4(+). The protein operates within amino-acid biosynthesis; L-arginine biosynthesis; carbamoyl phosphate from bicarbonate: step 1/1. It participates in pyrimidine metabolism; UMP biosynthesis via de novo pathway; (S)-dihydroorotate from bicarbonate: step 1/3. Small subunit of the glutamine-dependent carbamoyl phosphate synthetase (CPSase). CPSase catalyzes the formation of carbamoyl phosphate from the ammonia moiety of glutamine, carbonate, and phosphate donated by ATP, constituting the first step of 2 biosynthetic pathways, one leading to arginine and/or urea and the other to pyrimidine nucleotides. The small subunit (glutamine amidotransferase) binds and cleaves glutamine to supply the large subunit with the substrate ammonia. The sequence is that of Carbamoyl phosphate synthase small chain from Pseudomonas aeruginosa (strain ATCC 15692 / DSM 22644 / CIP 104116 / JCM 14847 / LMG 12228 / 1C / PRS 101 / PAO1).